Here is a 165-residue protein sequence, read N- to C-terminus: UPF0262 protein Sala_0765 (165 aa).

It belongs to the UPF0262 family.

This Sphingopyxis alaskensis (strain DSM 13593 / LMG 18877 / RB2256) (Sphingomonas alaskensis) protein is UPF0262 protein Sala_0765.